A 374-amino-acid polypeptide reads, in one-letter code: UDP-N-acetylglucosamine--N-acetylmuramyl-(pentapeptide) pyrophosphoryl-undecaprenol N-acetylglucosamine transferase (374 aa).

UDP-N-acetyl-alpha-D-glucosamine-binding positions include 13–15 (TGG), asparagine 124, arginine 165, serine 193, and glutamine 294.

The protein belongs to the glycosyltransferase 28 family. MurG subfamily.

The protein resides in the cell inner membrane. The catalysed reaction is di-trans,octa-cis-undecaprenyl diphospho-N-acetyl-alpha-D-muramoyl-L-alanyl-D-glutamyl-meso-2,6-diaminopimeloyl-D-alanyl-D-alanine + UDP-N-acetyl-alpha-D-glucosamine = di-trans,octa-cis-undecaprenyl diphospho-[N-acetyl-alpha-D-glucosaminyl-(1-&gt;4)]-N-acetyl-alpha-D-muramoyl-L-alanyl-D-glutamyl-meso-2,6-diaminopimeloyl-D-alanyl-D-alanine + UDP + H(+). It participates in cell wall biogenesis; peptidoglycan biosynthesis. Cell wall formation. Catalyzes the transfer of a GlcNAc subunit on undecaprenyl-pyrophosphoryl-MurNAc-pentapeptide (lipid intermediate I) to form undecaprenyl-pyrophosphoryl-MurNAc-(pentapeptide)GlcNAc (lipid intermediate II). This Rhizobium etli (strain CIAT 652) protein is UDP-N-acetylglucosamine--N-acetylmuramyl-(pentapeptide) pyrophosphoryl-undecaprenol N-acetylglucosamine transferase.